The chain runs to 253 residues: 5'/3'-nucleotidase SurE (253 aa).

Residues Asp-8, Asp-9, Ser-39, and Asn-92 each contribute to the a divalent metal cation site.

Belongs to the SurE nucleotidase family. It depends on a divalent metal cation as a cofactor.

It localises to the cytoplasm. It carries out the reaction a ribonucleoside 5'-phosphate + H2O = a ribonucleoside + phosphate. The catalysed reaction is a ribonucleoside 3'-phosphate + H2O = a ribonucleoside + phosphate. The enzyme catalyses [phosphate](n) + H2O = [phosphate](n-1) + phosphate + H(+). Nucleotidase with a broad substrate specificity as it can dephosphorylate various ribo- and deoxyribonucleoside 5'-monophosphates and ribonucleoside 3'-monophosphates with highest affinity to 3'-AMP. Also hydrolyzes polyphosphate (exopolyphosphatase activity) with the preference for short-chain-length substrates (P20-25). Might be involved in the regulation of dNTP and NTP pools, and in the turnover of 3'-mononucleotides produced by numerous intracellular RNases (T1, T2, and F) during the degradation of various RNAs. This is 5'/3'-nucleotidase SurE from Citrobacter koseri (strain ATCC BAA-895 / CDC 4225-83 / SGSC4696).